A 493-amino-acid chain; its full sequence is Glycerol kinase (493 aa).

Residue threonine 11 coordinates ADP. ATP is bound by residues threonine 11, threonine 12, and serine 13. Threonine 11 contacts sn-glycerol 3-phosphate. Residue arginine 15 participates in ADP binding. Residues arginine 80, glutamate 81, tyrosine 132, and aspartate 241 each coordinate sn-glycerol 3-phosphate. Residues arginine 80, glutamate 81, tyrosine 132, aspartate 241, and glutamine 242 each contribute to the glycerol site. ADP is bound by residues threonine 263 and glycine 306. Threonine 263, glycine 306, glutamine 310, and glycine 408 together coordinate ATP. An ADP-binding site is contributed by glycine 408.

The protein belongs to the FGGY kinase family.

It carries out the reaction glycerol + ATP = sn-glycerol 3-phosphate + ADP + H(+). The protein operates within polyol metabolism; glycerol degradation via glycerol kinase pathway; sn-glycerol 3-phosphate from glycerol: step 1/1. Its activity is regulated as follows. Inhibited by fructose 1,6-bisphosphate (FBP). Key enzyme in the regulation of glycerol uptake and metabolism. Catalyzes the phosphorylation of glycerol to yield sn-glycerol 3-phosphate. This is Glycerol kinase from Cereibacter sphaeroides (strain ATCC 17025 / ATH 2.4.3) (Rhodobacter sphaeroides).